Here is a 466-residue protein sequence, read N- to C-terminus: Glutamate--tRNA ligase (466 aa).

The short motif at 10-20 (PSPTGYLHVGG) is the 'HIGH' region element. Positions 99, 101, 126, and 128 each coordinate Zn(2+). The 'KMSKS' region signature appears at 237–241 (RLSKR). Residue K240 coordinates ATP.

Belongs to the class-I aminoacyl-tRNA synthetase family. Glutamate--tRNA ligase type 1 subfamily. In terms of assembly, monomer. Requires Zn(2+) as cofactor.

The protein resides in the cytoplasm. It catalyses the reaction tRNA(Glu) + L-glutamate + ATP = L-glutamyl-tRNA(Glu) + AMP + diphosphate. Its function is as follows. Catalyzes the attachment of glutamate to tRNA(Glu) in a two-step reaction: glutamate is first activated by ATP to form Glu-AMP and then transferred to the acceptor end of tRNA(Glu). The protein is Glutamate--tRNA ligase of Trichlorobacter lovleyi (strain ATCC BAA-1151 / DSM 17278 / SZ) (Geobacter lovleyi).